The chain runs to 30 residues: Cytochrome c3, 50 kDa (30 aa).

As to quaternary structure, monomer. Post-translationally, binds 4 heme groups per subunit.

It is found in the periplasm. In terms of biological role, participates in sulfate respiration coupled with phosphorylation by transferring electrons from the enzyme dehydrogenase to ferredoxin. The protein is Cytochrome c3, 50 kDa of Desulfuromonas acetoxidans (Chloropseudomonas ethylica).